The primary structure comprises 179 residues: ATP synthase subunit b (179 aa).

A helical transmembrane segment spans residues 27–47 (TAITFLVMLVVLGKFAWGPIV).

Belongs to the ATPase B chain family. As to quaternary structure, F-type ATPases have 2 components, F(1) - the catalytic core - and F(0) - the membrane proton channel. F(1) has five subunits: alpha(3), beta(3), gamma(1), delta(1), epsilon(1). F(0) has three main subunits: a(1), b(2) and c(10-14). The alpha and beta chains form an alternating ring which encloses part of the gamma chain. F(1) is attached to F(0) by a central stalk formed by the gamma and epsilon chains, while a peripheral stalk is formed by the delta and b chains.

The protein resides in the cell inner membrane. Its function is as follows. F(1)F(0) ATP synthase produces ATP from ADP in the presence of a proton or sodium gradient. F-type ATPases consist of two structural domains, F(1) containing the extramembraneous catalytic core and F(0) containing the membrane proton channel, linked together by a central stalk and a peripheral stalk. During catalysis, ATP synthesis in the catalytic domain of F(1) is coupled via a rotary mechanism of the central stalk subunits to proton translocation. In terms of biological role, component of the F(0) channel, it forms part of the peripheral stalk, linking F(1) to F(0). This is ATP synthase subunit b from Anaeromyxobacter sp. (strain K).